The sequence spans 160 residues: NADH-quinone oxidoreductase subunit B (160 aa).

[4Fe-4S] cluster contacts are provided by Cys-39, Cys-40, Cys-104, and Cys-135.

The protein belongs to the complex I 20 kDa subunit family. In terms of assembly, NDH-1 is composed of 14 different subunits. Subunits NuoB, C, D, E, F, and G constitute the peripheral sector of the complex. [4Fe-4S] cluster serves as cofactor.

The protein localises to the cell membrane. The enzyme catalyses a quinone + NADH + 5 H(+)(in) = a quinol + NAD(+) + 4 H(+)(out). Its function is as follows. NDH-1 shuttles electrons from NADH, via FMN and iron-sulfur (Fe-S) centers, to quinones in the respiratory chain. The immediate electron acceptor for the enzyme in this species is believed to be a menaquinone. Couples the redox reaction to proton translocation (for every two electrons transferred, four hydrogen ions are translocated across the cytoplasmic membrane), and thus conserves the redox energy in a proton gradient. The polypeptide is NADH-quinone oxidoreductase subunit B (Amoebophilus asiaticus (strain 5a2)).